The following is a 217-amino-acid chain: ATP phosphoribosyltransferase (217 aa).

The protein belongs to the ATP phosphoribosyltransferase family. Short subfamily. In terms of assembly, heteromultimer composed of HisG and HisZ subunits.

The protein resides in the cytoplasm. It carries out the reaction 1-(5-phospho-beta-D-ribosyl)-ATP + diphosphate = 5-phospho-alpha-D-ribose 1-diphosphate + ATP. It functions in the pathway amino-acid biosynthesis; L-histidine biosynthesis; L-histidine from 5-phospho-alpha-D-ribose 1-diphosphate: step 1/9. In terms of biological role, catalyzes the condensation of ATP and 5-phosphoribose 1-diphosphate to form N'-(5'-phosphoribosyl)-ATP (PR-ATP). Has a crucial role in the pathway because the rate of histidine biosynthesis seems to be controlled primarily by regulation of HisG enzymatic activity. In Burkholderia vietnamiensis (strain G4 / LMG 22486) (Burkholderia cepacia (strain R1808)), this protein is ATP phosphoribosyltransferase.